The primary structure comprises 160 residues: Secreted RxLR effector protein RXLR-C11 (160 aa).

The first 19 residues, 1–19 (MHFSLVLLVFAAIVIPICA), serve as a signal peptide directing secretion. The RxLR-dEER motif lies at 58 to 75 (RLLRMNDKAVISDHEEER).

This sequence belongs to the RxLR effector family.

The protein localises to the secreted. Its subcellular location is the host cell membrane. The protein resides in the host nucleus. Secreted effector that suppresses pattern-triggered immunity (PTI) in plant host. This Plasmopara halstedii (Downy mildew of sunflower) protein is Secreted RxLR effector protein RXLR-C11.